The chain runs to 157 residues: V-type proton ATPase 16 kDa proteolipid subunit c (157 aa).

The Lumenal portion of the chain corresponds to 1-10 (MALPEENPVY). The helical transmembrane segment at 11–33 (GPFFGVMGAAAAIIFSALGAAYG) threads the bilayer. Residues 34–55 (TAKSGTGIAAMSVMRPELIMKS) are Cytoplasmic-facing. A helical membrane pass occupies residues 56-76 (IIPVVMAGIIAIYGLVVAVLI). The Lumenal segment spans residues 77–94 (AGSLDTPTKYSLYKGFIH). Residues 95 to 116 (LGAGLAVGFSGLAAGFAIGIVG) traverse the membrane as a helical segment. Residues 117-128 (DAGVRGTAQQPR) lie on the Cytoplasmic side of the membrane. A helical membrane pass occupies residues 129–154 (LFVGMILILIFAEVLGLYGLIVAIYL). Residues 155-157 (YTK) are Lumenal-facing.

Belongs to the V-ATPase proteolipid subunit family. V-ATPase is a heteromultimeric enzyme made up of two complexes: the ATP-hydrolytic V1 complex and the proton translocation V0 complex. The V1 complex consists of three catalytic AB heterodimers that form a heterohexamer, three peripheral stalks each consisting of EG heterodimers, one central rotor including subunits D and F, and the regulatory subunits C and H. The proton translocation complex V0 consists of the proton transport subunit a, a ring of proteolipid subunits c9c'', rotary subunit d, subunits e and f, and the accessory subunits VhaAC45 and ATP6AP2.

The protein resides in the membrane. In terms of biological role, proton-conducting pore forming subunit of the V0 complex of vacuolar(H+)-ATPase (V-ATPase), a multisubunit enzyme composed of a peripheral complex (V1) that hydrolyzes ATP and a membrane integral complex (V0) that translocates protons. V-ATPase is responsible for acidifying and maintaining the pH of intracellular compartments and in some cell types, is targeted to the plasma membrane, where it is responsible for acidifying the extracellular environment. The sequence is that of V-type proton ATPase 16 kDa proteolipid subunit c from Aedes aegypti (Yellowfever mosquito).